The primary structure comprises 252 residues: PF03932 family protein CutC (252 aa).

It belongs to the CutC family.

The protein localises to the cytoplasm. The polypeptide is PF03932 family protein CutC (Pectobacterium atrosepticum (strain SCRI 1043 / ATCC BAA-672) (Erwinia carotovora subsp. atroseptica)).